A 212-amino-acid chain; its full sequence is Peptide methionine sulfoxide reductase MsrA (212 aa).

Cys51 is a catalytic residue.

This sequence belongs to the MsrA Met sulfoxide reductase family.

The enzyme catalyses L-methionyl-[protein] + [thioredoxin]-disulfide + H2O = L-methionyl-(S)-S-oxide-[protein] + [thioredoxin]-dithiol. It catalyses the reaction [thioredoxin]-disulfide + L-methionine + H2O = L-methionine (S)-S-oxide + [thioredoxin]-dithiol. Has an important function as a repair enzyme for proteins that have been inactivated by oxidation. Catalyzes the reversible oxidation-reduction of methionine sulfoxide in proteins to methionine. The polypeptide is Peptide methionine sulfoxide reductase MsrA (Vibrio parahaemolyticus serotype O3:K6 (strain RIMD 2210633)).